We begin with the raw amino-acid sequence, 66 residues long: Large ribosomal subunit protein bL33c (66 aa).

This sequence belongs to the bacterial ribosomal protein bL33 family.

It localises to the plastid. The protein localises to the chloroplast. This chain is Large ribosomal subunit protein bL33c, found in Nasturtium officinale (Watercress).